Consider the following 586-residue polypeptide: Probable zinc metalloprotease EGY3, chloroplastic (586 aa).

A chloroplast-targeting transit peptide spans 1-54 (MASSSLVTSLLFSSSSSSNTATSTSSRRSFSLFSKNQYCKPRPLRRSSSRLLVR). Disordered stretches follow at residues 13–32 (SSSS…SFSL) and 58–122 (QQQQ…DWRS). The span at 61-73 (QEEKAAPAAESHH) shows a compositional bias: basic and acidic residues. Positions 103–195 (VKKSKEELEE…NTFKALDLNK (93 aa)) form a coiled coil. 7 consecutive transmembrane segments (helical) span residues 287–307 (LSAV…SGFF), 318–338 (VSDV…SEIA), 389–409 (ASAY…DGSL), 427–447 (PLLS…GNVL), 454–474 (VGVP…VTSL), 506–526 (VALG…WGLF), and 550–570 (YAWG…NGGG).

It belongs to the peptidase M50B family.

Its subcellular location is the plastid. The protein resides in the chloroplast membrane. In terms of biological role, probable membrane-associated metalloprotease that may be involved in chloroplast development. In Oryza sativa subsp. japonica (Rice), this protein is Probable zinc metalloprotease EGY3, chloroplastic (EGY3).